The chain runs to 287 residues: Urease accessory protein UreD (287 aa).

This sequence belongs to the UreD family. As to quaternary structure, ureD, UreF and UreG form a complex that acts as a GTP-hydrolysis-dependent molecular chaperone, activating the urease apoprotein by helping to assemble the nickel containing metallocenter of UreC. The UreE protein probably delivers the nickel.

Its subcellular location is the cytoplasm. Its function is as follows. Required for maturation of urease via the functional incorporation of the urease nickel metallocenter. This is Urease accessory protein UreD from Aliivibrio fischeri (strain MJ11) (Vibrio fischeri).